A 231-amino-acid polypeptide reads, in one-letter code: Ribonuclease 3 (231 aa).

Positions 7–135 constitute an RNase III domain; sequence IQAIESKLNF…ILGAVYLDGG (129 aa). Position 48 (Glu48) interacts with Mg(2+). Residue Asp52 is part of the active site. The Mg(2+) site is built by Asn121 and Glu124. Glu124 is a catalytic residue. A DRBM domain is found at 160 to 229; the sequence is NPKNRLQQFT…AKQALSTHDN (70 aa).

Belongs to the ribonuclease III family. Homodimer. Requires Mg(2+) as cofactor.

It is found in the cytoplasm. It carries out the reaction Endonucleolytic cleavage to 5'-phosphomonoester.. Functionally, digests double-stranded RNA. Involved in the processing of primary rRNA transcript to yield the immediate precursors to the large and small rRNAs (23S and 16S). Processes some mRNAs, and tRNAs when they are encoded in the rRNA operon. Processes pre-crRNA and tracrRNA of type II CRISPR loci if present in the organism. The protein is Ribonuclease 3 of Chlamydia trachomatis serovar A (strain ATCC VR-571B / DSM 19440 / HAR-13).